The chain runs to 253 residues: NADH-quinone oxidoreductase subunit C (253 aa).

Disordered regions lie at residues 1–33 (MSPD…DTEP) and 234–253 (IPVE…RAYS).

It belongs to the complex I 30 kDa subunit family. In terms of assembly, NDH-1 is composed of 14 different subunits. Subunits NuoB, C, D, E, F, and G constitute the peripheral sector of the complex.

It localises to the cell membrane. The enzyme catalyses a quinone + NADH + 5 H(+)(in) = a quinol + NAD(+) + 4 H(+)(out). In terms of biological role, NDH-1 shuttles electrons from NADH, via FMN and iron-sulfur (Fe-S) centers, to quinones in the respiratory chain. The immediate electron acceptor for the enzyme in this species is believed to be a menaquinone. Couples the redox reaction to proton translocation (for every two electrons transferred, four hydrogen ions are translocated across the cytoplasmic membrane), and thus conserves the redox energy in a proton gradient. In Nocardia farcinica (strain IFM 10152), this protein is NADH-quinone oxidoreductase subunit C.